A 422-amino-acid chain; its full sequence is Metallocarboxypeptidase A (422 aa).

The N-terminal stretch at Met1 to Ala17 is a signal peptide. A propeptide spans Ala18 to Pro112 (activation peptide). The Peptidase M14 domain occupies Ser119–Val419. Zn(2+)-binding residues include His179 and Glu182. Substrate-binding positions include His179–Glu182, Arg237, and Asn254–Arg255. Cys248 and Cys271 are disulfide-bonded. His309 contributes to the Zn(2+) binding site. A substrate-binding site is contributed by Ser310–Tyr311. The active-site Proton donor/acceptor is Glu385.

Belongs to the peptidase M14 family. Requires Zn(2+) as cofactor.

The protein resides in the secreted. In terms of biological role, extracellular metalloprotease that contributes to pathogenicity. The sequence is that of Metallocarboxypeptidase A (MCPA) from Trichophyton equinum (Horse ringworm fungus).